The primary structure comprises 125 residues: Glycine cleavage system H protein (125 aa).

A Lipoyl-binding domain is found at 19 to 101 (VAVVGISDYA…EGKGWFMKLK (83 aa)). An N6-lipoyllysine modification is found at lysine 60.

Belongs to the GcvH family. In terms of assembly, the glycine cleavage system is composed of four proteins: P, T, L and H. (R)-lipoate is required as a cofactor.

The glycine cleavage system catalyzes the degradation of glycine. The H protein shuttles the methylamine group of glycine from the P protein to the T protein. The sequence is that of Glycine cleavage system H protein from Xanthobacter autotrophicus (strain ATCC BAA-1158 / Py2).